A 25-amino-acid polypeptide reads, in one-letter code: Small ribosomal subunit protein eS32 (25 aa).

The disordered stretch occupies residues 1–25 (MRAKWRKKRMRRLKRKRRKMRARSK).

Belongs to the eukaryotic ribosomal protein eS32 family. In terms of assembly, component of the small ribosomal subunit.

In Spodoptera frugiperda (Fall armyworm), this protein is Small ribosomal subunit protein eS32 (RpL41).